The sequence spans 539 residues: 2,3-bisphosphoglycerate-independent phosphoglycerate mutase (539 aa).

Residues aspartate 37 and serine 86 each contribute to the Mn(2+) site. The active site involves serine 86. Substrate-binding positions include histidine 147, arginine 177–aspartate 178, arginine 210, arginine 216, arginine 284–arginine 287, and lysine 359. Residues aspartate 426, histidine 430, aspartate 467, histidine 468, and histidine 485 each coordinate Mn(2+).

It belongs to the BPG-independent phosphoglycerate mutase family. It depends on Mg(2+) as a cofactor. Mn(2+) is required as a cofactor. As to expression, expressed ubiquitously. High expression levels in the nerve ring region, intestine and body wall muscles.

It catalyses the reaction (2R)-2-phosphoglycerate = (2R)-3-phosphoglycerate. It functions in the pathway carbohydrate degradation; glycolysis; pyruvate from D-glyceraldehyde 3-phosphate: step 3/5. Activity is not affected by 2,3-bisphosphoglycerate. Functionally, catalyzes the interconversion of 2-phosphoglycerate and 3-phosphoglycerate. This is 2,3-bisphosphoglycerate-independent phosphoglycerate mutase from Caenorhabditis elegans.